The primary structure comprises 363 residues: Protein RecA (363 aa).

77 to 84 (GPESSGKT) serves as a coordination point for ATP.

The protein belongs to the RecA family.

It is found in the cytoplasm. In terms of biological role, can catalyze the hydrolysis of ATP in the presence of single-stranded DNA, the ATP-dependent uptake of single-stranded DNA by duplex DNA, and the ATP-dependent hybridization of homologous single-stranded DNAs. It interacts with LexA causing its activation and leading to its autocatalytic cleavage. The protein is Protein RecA of Agrobacterium fabrum (strain C58 / ATCC 33970) (Agrobacterium tumefaciens (strain C58)).